A 60-amino-acid chain; its full sequence is Conotoxin Cl1.1 (60 aa).

A signal peptide spans 1–19; that stretch reads MRCLPVIVILLLLISSAAA. The propeptide occupies 20-48; the sequence is VVEGPLRVNRRLRPRKAPVDMQARDWNWG.

Belongs to the conotoxin T superfamily. Contains 2 disulfide bonds. As to expression, expressed by the venom duct.

The protein localises to the secreted. The sequence is that of Conotoxin Cl1.1 from Californiconus californicus (California cone).